The sequence spans 641 residues: 1-deoxy-D-xylulose-5-phosphate synthase (641 aa).

Thiamine diphosphate is bound by residues His-71 and 112–114; that span reads SHA. Asp-144 is a Mg(2+) binding site. Residues 145–146, Asn-173, Tyr-284, and Glu-365 each bind thiamine diphosphate; that span reads GA. Asn-173 contributes to the Mg(2+) binding site.

This sequence belongs to the transketolase family. DXPS subfamily. Homodimer. It depends on Mg(2+) as a cofactor. Thiamine diphosphate is required as a cofactor.

It carries out the reaction D-glyceraldehyde 3-phosphate + pyruvate + H(+) = 1-deoxy-D-xylulose 5-phosphate + CO2. It participates in metabolic intermediate biosynthesis; 1-deoxy-D-xylulose 5-phosphate biosynthesis; 1-deoxy-D-xylulose 5-phosphate from D-glyceraldehyde 3-phosphate and pyruvate: step 1/1. Its function is as follows. Catalyzes the acyloin condensation reaction between C atoms 2 and 3 of pyruvate and glyceraldehyde 3-phosphate to yield 1-deoxy-D-xylulose-5-phosphate (DXP). In Mycolicibacterium paratuberculosis (strain ATCC BAA-968 / K-10) (Mycobacterium paratuberculosis), this protein is 1-deoxy-D-xylulose-5-phosphate synthase.